The primary structure comprises 313 residues: MSITIDTSVDIDLPTPPQSNGSQKRNLLLAPPSVAAHEEKLRDVFSTFDRSSTDLQMLDRLSAGFVSLPPNTYDLVLVLTDAQSDEAVRLLTRDVYTALVPAMKAGARLQLQQGSLGASEGLEAILAGLVEKDGGFEKPVQEAAVPLKLGGRKKKDKTNGVNGVQNGVATNGASTNGVGMFDPAQNNDDELIDEDALLSDDDLKRPLPRPQNCVPETAKKRRRPCKDCTCGLASQLEEEDRAREAKAAQDLNILKLNTDDLNDELDFTVQGKTSSCNSCSLGDAFRCSSCPYIGLPPFKPGEEVKIMNDMVQL.

Disordered stretches follow at residues 1 to 25 (MSIT…SQKR) and 151 to 187 (GRKK…AQNN). The segment at 20–145 (NGSQKRNLLL…FEKPVQEAAV (126 aa)) is N-terminal SAM-like domain. The interval 146-203 (PLKLGGRKKKDKTNGVNGVQNGVATNGASTNGVGMFDPAQNNDDELIDEDALLSDDDL) is linker. Over residues 159–177 (NGVNGVQNGVATNGASTNG) the composition is skewed to polar residues. C213, C225, C228, and C230 together coordinate [2Fe-2S] cluster. Residues 213–230 (CVPETAKKRRRPCKDCTC) form a fe-S binding site A region. 4 residues coordinate [4Fe-4S] cluster: C276, C279, C287, and C290. Short sequence motifs (cx2C motif) lie at residues 276–279 (CNSC) and 287–290 (CSSC). The tract at residues 276–290 (CNSCSLGDAFRCSSC) is fe-S binding site B.

It belongs to the anamorsin family. Monomer. Interacts with tah18. Interacts with mia40. [2Fe-2S] cluster is required as a cofactor. It depends on [4Fe-4S] cluster as a cofactor.

It is found in the cytoplasm. Its subcellular location is the mitochondrion intermembrane space. Functionally, component of the cytosolic iron-sulfur (Fe-S) protein assembly (CIA) machinery required for the maturation of extramitochondrial Fe-S proteins. Part of an electron transfer chain functioning in an early step of cytosolic Fe-S biogenesis, facilitating the de novo assembly of a [4Fe-4S] cluster on the scaffold complex cfd1-nbp35. Electrons are transferred to dre2 from NADPH via the FAD- and FMN-containing protein tah18. Tah18-dre2 are also required for the assembly of the diferric tyrosyl radical cofactor of ribonucleotide reductase (RNR), probably by providing electrons for reduction during radical cofactor maturation in the catalytic small subunit rnr2. The sequence is that of Fe-S cluster assembly protein dre2 from Aspergillus flavus (strain ATCC 200026 / FGSC A1120 / IAM 13836 / NRRL 3357 / JCM 12722 / SRRC 167).